A 1002-amino-acid chain; its full sequence is Isoleucine--tRNA ligase (1002 aa).

Positions 70–80 (PYANGNIHIGH) match the 'HIGH' region motif. Glu630 lines the L-isoleucyl-5'-AMP pocket. Positions 671–675 (KMSKS) match the 'KMSKS' region motif. Lys674 is a binding site for ATP.

This sequence belongs to the class-I aminoacyl-tRNA synthetase family. IleS type 1 subfamily. Monomer.

It localises to the cytoplasm. It catalyses the reaction tRNA(Ile) + L-isoleucine + ATP = L-isoleucyl-tRNA(Ile) + AMP + diphosphate. In terms of biological role, catalyzes the attachment of isoleucine to tRNA(Ile). As IleRS can inadvertently accommodate and process structurally similar amino acids such as valine, to avoid such errors it has two additional distinct tRNA(Ile)-dependent editing activities. One activity is designated as 'pretransfer' editing and involves the hydrolysis of activated Val-AMP. The other activity is designated 'posttransfer' editing and involves deacylation of mischarged Val-tRNA(Ile). The protein is Isoleucine--tRNA ligase of Bradyrhizobium diazoefficiens (strain JCM 10833 / BCRC 13528 / IAM 13628 / NBRC 14792 / USDA 110).